The sequence spans 381 residues: ATP-dependent (S)-NAD(P)H-hydrate dehydratase (381 aa).

One can recognise a YjeF C-terminal domain in the interval 84-376 (AEAVVRRITP…EFLGKSLEDI (293 aa)). Residues G197 and 250 to 256 (NVYEYKR) contribute to the (6S)-NADPHX site. ATP-binding positions include 290-294 (KGKAD) and 309-318 (GSPRRCGGQG). D319 is a (6S)-NADPHX binding site.

It belongs to the NnrD/CARKD family. It depends on Mg(2+) as a cofactor.

The catalysed reaction is (6S)-NADHX + ATP = ADP + phosphate + NADH + H(+). It carries out the reaction (6S)-NADPHX + ATP = ADP + phosphate + NADPH + H(+). Catalyzes the dehydration of the S-form of NAD(P)HX at the expense of ATP, which is converted to ADP. Together with NAD(P)HX epimerase, which catalyzes the epimerization of the S- and R-forms, the enzyme allows the repair of both epimers of NAD(P)HX, a damaged form of NAD(P)H that is a result of enzymatic or heat-dependent hydration. The sequence is that of ATP-dependent (S)-NAD(P)H-hydrate dehydratase from Sorghum bicolor (Sorghum).